An 880-amino-acid polypeptide reads, in one-letter code: Leucine-rich repeat-containing protein 66 (880 aa).

The helical transmembrane segment at 4-24 threads the bilayer; sequence LYFRVITIVIGLYFTGIMTNA. Residue Asn-45 is glycosylated (N-linked (GlcNAc...) asparagine). LRR repeat units follow at residues 86–107, 110–130, 149–171, 172–193, 196–217, and 220–241; these read KIKH…PFAY, ALEV…DLLS, LLKV…WKLK, SLQS…DFHN, QLEN…AFKD, and KLQV…MIIA. N-linked (GlcNAc...) asparagine glycosylation occurs at Asn-115. The tract at residues 319 to 368 is disordered; it reads SKAERPQGGRHTGISTLGKKAKAGSGLRKKQRRLPRSVRSTRDVQAAGKK. A compositionally biased stretch (basic residues) spans 337 to 354; it reads KKAKAGSGLRKKQRRLPR. The helical transmembrane segment at 376-396 threads the bilayer; that stretch reads ALAVCLSVFITFLVAFSLGAF. Disordered stretches follow at residues 463–504 and 679–746; these read PHPH…NDGA and VTPA…SKDN. Residues 483–493 show a composition bias toward polar residues; sequence GSSQSPGQCGD. Residues 697–707 show a composition bias toward acidic residues; it reads CELESDCDSDE. Positions 709–720 are enriched in low complexity; that stretch reads SLFTLSSISSES. Ser-723 is subject to Phosphoserine. The segment covering 737 to 746 has biased composition (polar residues); the sequence is DESSGASKDN. Asn-746 is a glycosylation site (N-linked (GlcNAc...) asparagine). Ser-752 carries the post-translational modification Phosphoserine. N-linked (GlcNAc...) asparagine glycosylation occurs at Asn-756. Disordered regions lie at residues 764 to 816 and 855 to 880; these read GKCK…PLGD and TPPC…DILK. 2 stretches are compositionally biased toward basic and acidic residues: residues 788–800 and 865–880; these read THLE…DRSE and DPDK…DILK.

It localises to the membrane. The protein is Leucine-rich repeat-containing protein 66 (LRRC66) of Homo sapiens (Human).